The primary structure comprises 362 residues: Malate dehydrogenase (362 aa).

This sequence belongs to the LDH2/MDH2 oxidoreductase family. In terms of assembly, homodimer.

It localises to the cytoplasm. It catalyses the reaction (S)-malate + NAD(+) = oxaloacetate + NADH + H(+). This chain is Malate dehydrogenase (mdh), found in Pyrococcus abyssi (strain GE5 / Orsay).